The following is a 196-amino-acid chain: Phosphoheptose isomerase (196 aa).

The SIS domain occupies 33–192 (LIQSLKNGGK…ESECGENGNT (160 aa)). Substrate is bound at residue 48-50 (NGG). Positions 57 and 61 each coordinate Zn(2+). Substrate-binding positions include glutamate 61, 90-91 (ND), 116-118 (STS), serine 121, and glutamine 168. Zn(2+) contacts are provided by glutamine 168 and histidine 176.

Belongs to the SIS family. GmhA subfamily. Homotetramer. The cofactor is Zn(2+).

It localises to the cytoplasm. It catalyses the reaction 2 D-sedoheptulose 7-phosphate = D-glycero-alpha-D-manno-heptose 7-phosphate + D-glycero-beta-D-manno-heptose 7-phosphate. The protein operates within carbohydrate biosynthesis; D-glycero-D-manno-heptose 7-phosphate biosynthesis; D-glycero-alpha-D-manno-heptose 7-phosphate and D-glycero-beta-D-manno-heptose 7-phosphate from sedoheptulose 7-phosphate: step 1/1. Catalyzes the isomerization of sedoheptulose 7-phosphate in D-glycero-D-manno-heptose 7-phosphate. The chain is Phosphoheptose isomerase from Helicobacter hepaticus (strain ATCC 51449 / 3B1).